The chain runs to 282 residues: Biotin synthase (282 aa).

Residues 1-228 (MQEIFLCSIS…NARLMVAGGR (228 aa)) enclose the Radical SAM core domain. The [4Fe-4S] cluster site is built by Cys17, Cys21, and Cys24. [2Fe-2S] cluster contacts are provided by Cys61, Cys96, Cys154, and Arg221.

It belongs to the radical SAM superfamily. Biotin synthase family. Homodimer. The cofactor is [4Fe-4S] cluster. [2Fe-2S] cluster serves as cofactor.

The enzyme catalyses (4R,5S)-dethiobiotin + (sulfur carrier)-SH + 2 reduced [2Fe-2S]-[ferredoxin] + 2 S-adenosyl-L-methionine = (sulfur carrier)-H + biotin + 2 5'-deoxyadenosine + 2 L-methionine + 2 oxidized [2Fe-2S]-[ferredoxin]. It participates in cofactor biosynthesis; biotin biosynthesis; biotin from 7,8-diaminononanoate: step 2/2. Catalyzes the conversion of dethiobiotin (DTB) to biotin by the insertion of a sulfur atom into dethiobiotin via a radical-based mechanism. The polypeptide is Biotin synthase (Helicobacter pylori (strain P12)).